The following is a 584-amino-acid chain: Endogenous retrovirus group FC1 Env polyprotein (584 aa).

Residues 1 to 22 (MARPSPLCLLLLLTLLPPIVPS) form the signal peptide. The Extracellular segment spans residues 23–514 (NSLLTEPPFR…NYGGGWWQSP (492 aa)). 2 N-linked (GlcNAc...) asparagine glycosylation sites follow: N69 and N247. The CXXC signature appears at 251–254 (CFLC). Residues N272, N276, N308, N313, N322, N334, N342, and N346 are each glycosylated (N-linked (GlcNAc...) asparagine). The fusion peptide stretch occupies residues 388–413 (PLVIGVSLTSSLVASGLGTGAIVHFI). Positions 449–465 (MQNRRALDLLTADKGGT) match the CKS-17 motif. C466 and C473 form a disulfide bridge. The CX6CC motif lies at 466-474 (CMFLGEECC). N-linked (GlcNAc...) asparagine glycosylation occurs at N478. Residues 515–540 (LTTWIIPFISPILIICLLLLIAPCVL) traverse the membrane as a helical segment. Residues 541–584 (KFIKNRISEVSRVTVNQMLLHPYSRLPTSEDHYDVALTQQEAAR) are Cytoplasmic-facing.

This sequence belongs to the gamma type-C retroviral envelope protein family. HERV class-I F(c)1 env subfamily. In terms of assembly, the surface (SU) and transmembrane (TM) proteins form a heterodimer. SU and TM are attached by noncovalent interactions or by a labile interchain disulfide bond. In terms of processing, specific enzymatic cleavages in vivo yield the mature SU and TM proteins. The CXXC motif is highly conserved across a broad range of retroviral envelope proteins. It is thought to participate in the formation of a labile disulfide bond possibly with the CX6CC motif present in the transmembrane protein.

It is found in the virion. The protein resides in the cell membrane. Retroviral envelope proteins mediate receptor recognition and membrane fusion during early infection. Endogenous envelope proteins may have kept, lost or modified their original function during evolution. This endogenous envelope protein has lost its original fusogenic properties. Functionally, SU mediates receptor recognition. Its function is as follows. TM anchors the envelope heterodimer to the viral membrane through one transmembrane domain. The other hydrophobic domain, called fusion peptide, mediates fusion of the viral membrane with the target cell membrane. This chain is Endogenous retrovirus group FC1 Env polyprotein (ERVFC1), found in Pan troglodytes (Chimpanzee).